We begin with the raw amino-acid sequence, 331 residues long: Serine/threonine-protein phosphatase 6 catalytic subunit (331 aa).

Mn(2+)-binding residues include aspartate 79, histidine 81, aspartate 107, and asparagine 139. Catalysis depends on histidine 140, which acts as the Proton donor. Residues histidine 189 and histidine 264 each coordinate Mn(2+).

Belongs to the PPP phosphatase family. PP-6 (PP-V) subfamily. As to quaternary structure, forms a complex composed of catalytic subunit pph-6 and regulatory subunit saps-1; the interaction increases pph-6 and saps-1 protein stability. Mn(2+) is required as a cofactor.

The protein resides in the cytoplasm. Its subcellular location is the cell cortex. The protein localises to the cytoskeleton. It is found in the spindle pole. It carries out the reaction O-phospho-L-seryl-[protein] + H2O = L-seryl-[protein] + phosphate. The enzyme catalyses O-phospho-L-threonyl-[protein] + H2O = L-threonyl-[protein] + phosphate. Its function is as follows. Catalytic subunit of protein phosphatase 6 (PP6). In complex with saps-1, promotes actomyosin contractility during cytokinesis by regulating the organization of cortical non-muscle myosin II nmy-2 and thus contributing to correct spindle positioning. Also required for the proper generation of pulling forces on spindle poles during anaphase by regulating the cortical localization of gpr-1, gpr-2 and lin-5. This Caenorhabditis elegans protein is Serine/threonine-protein phosphatase 6 catalytic subunit.